The primary structure comprises 277 residues: Putative phosphoenolpyruvate synthase regulatory protein (277 aa).

157–164 contributes to the ADP binding site; the sequence is GVSRSGKT.

Belongs to the pyruvate, phosphate/water dikinase regulatory protein family. PSRP subfamily.

It carries out the reaction [pyruvate, water dikinase] + ADP = [pyruvate, water dikinase]-phosphate + AMP + H(+). The enzyme catalyses [pyruvate, water dikinase]-phosphate + phosphate + H(+) = [pyruvate, water dikinase] + diphosphate. Its function is as follows. Bifunctional serine/threonine kinase and phosphorylase involved in the regulation of the phosphoenolpyruvate synthase (PEPS) by catalyzing its phosphorylation/dephosphorylation. The sequence is that of Putative phosphoenolpyruvate synthase regulatory protein from Vibrio vulnificus (strain CMCP6).